Consider the following 282-residue polypeptide: Bifunctional protein FolD (282 aa).

Residues 164 to 166, Ile189, and Ile230 contribute to the NADP(+) site; that span reads GAS.

This sequence belongs to the tetrahydrofolate dehydrogenase/cyclohydrolase family. As to quaternary structure, homodimer.

The enzyme catalyses (6R)-5,10-methylene-5,6,7,8-tetrahydrofolate + NADP(+) = (6R)-5,10-methenyltetrahydrofolate + NADPH. The catalysed reaction is (6R)-5,10-methenyltetrahydrofolate + H2O = (6R)-10-formyltetrahydrofolate + H(+). It functions in the pathway one-carbon metabolism; tetrahydrofolate interconversion. Functionally, catalyzes the oxidation of 5,10-methylenetetrahydrofolate to 5,10-methenyltetrahydrofolate and then the hydrolysis of 5,10-methenyltetrahydrofolate to 10-formyltetrahydrofolate. This Campylobacter jejuni subsp. jejuni serotype O:6 (strain 81116 / NCTC 11828) protein is Bifunctional protein FolD.